The following is a 383-amino-acid chain: Queuine tRNA-ribosyltransferase (383 aa).

Asp95 functions as the Proton acceptor in the catalytic mechanism. Substrate is bound by residues 95–99 (DSGGF), Asp149, Gln195, and Gly222. Residues 253–259 (GVGSPDS) form an RNA binding region. Asp272 acts as the Nucleophile in catalysis. Residues 277 to 281 (TRIAR) are RNA binding; important for wobble base 34 recognition. Zn(2+) is bound by residues Cys310, Cys312, Cys315, and His341.

This sequence belongs to the queuine tRNA-ribosyltransferase family. As to quaternary structure, homodimer. Within each dimer, one monomer is responsible for RNA recognition and catalysis, while the other monomer binds to the replacement base PreQ1. The cofactor is Zn(2+).

The catalysed reaction is 7-aminomethyl-7-carbaguanine + guanosine(34) in tRNA = 7-aminomethyl-7-carbaguanosine(34) in tRNA + guanine. The protein operates within tRNA modification; tRNA-queuosine biosynthesis. In terms of biological role, catalyzes the base-exchange of a guanine (G) residue with the queuine precursor 7-aminomethyl-7-deazaguanine (PreQ1) at position 34 (anticodon wobble position) in tRNAs with GU(N) anticodons (tRNA-Asp, -Asn, -His and -Tyr). Catalysis occurs through a double-displacement mechanism. The nucleophile active site attacks the C1' of nucleotide 34 to detach the guanine base from the RNA, forming a covalent enzyme-RNA intermediate. The proton acceptor active site deprotonates the incoming PreQ1, allowing a nucleophilic attack on the C1' of the ribose to form the product. After dissociation, two additional enzymatic reactions on the tRNA convert PreQ1 to queuine (Q), resulting in the hypermodified nucleoside queuosine (7-(((4,5-cis-dihydroxy-2-cyclopenten-1-yl)amino)methyl)-7-deazaguanosine). This is Queuine tRNA-ribosyltransferase from Shouchella clausii (strain KSM-K16) (Alkalihalobacillus clausii).